Consider the following 394-residue polypeptide: uncharacterized protein (394 aa).

Transmembrane regions (helical) follow at residues 13–35 (AIIG…VPVL), 50–72 (VGVA…GWLS), 79–97 (LIIN…IAWS), 107–129 (GRGL…ELVL), 136–158 (IMGL…SPII), 168–190 (FLIN…PASL), 218–240 (INLS…PVEL), 250–272 (VPEI…CICF), 277–299 (VLYS…GIFL), 309–331 (ILGL…ALVN), 344–366 (AIYS…ILFS), and 371–393 (FEVL…LYLI).

Belongs to the major facilitator superfamily.

The protein localises to the cell membrane. This is an uncharacterized protein from Buchnera aphidicola subsp. Baizongia pistaciae (strain Bp).